Reading from the N-terminus, the 185-residue chain is Adenine phosphoribosyltransferase (185 aa).

It belongs to the purine/pyrimidine phosphoribosyltransferase family. Homodimer.

It localises to the cytoplasm. It carries out the reaction AMP + diphosphate = 5-phospho-alpha-D-ribose 1-diphosphate + adenine. It participates in purine metabolism; AMP biosynthesis via salvage pathway; AMP from adenine: step 1/1. Functionally, catalyzes a salvage reaction resulting in the formation of AMP, that is energically less costly than de novo synthesis. This is Adenine phosphoribosyltransferase from Shewanella denitrificans (strain OS217 / ATCC BAA-1090 / DSM 15013).